A 501-amino-acid chain; its full sequence is Archaemetzincin-1 (501 aa).

A Zn(2+)-binding site is contributed by His261. Residue Glu262 is the Proton acceptor of the active site. Positions 265, 272, 277, 296, and 299 each coordinate Zn(2+). The disordered stretch occupies residues 349-370 (DSGMGCESDTEPVTSPSEPVTP).

The protein belongs to the peptidase M54 family. It depends on Zn(2+) as a cofactor.

Probable zinc metalloprotease. In Rattus norvegicus (Rat), this protein is Archaemetzincin-1 (Amz1).